Here is a 279-residue protein sequence, read N- to C-terminus: Movement protein (279 aa).

The tract at residues 247 to 279 (ESEELNVESPPAAIGSSSASRSEAFRPQVVNGL) is disordered. The span at 254–268 (ESPPAAIGSSSASRS) shows a compositional bias: low complexity.

The protein belongs to the cucumovirus movement protein family.

The protein localises to the host cell junction. It is found in the host plasmodesma. In terms of biological role, transports viral genome to neighboring plant cells directly through plasmosdesmata, without any budding. The movement protein allows efficient cell to cell propagation, by bypassing the host cell wall barrier. Acts by forming a tubular structure at the host plasmodesmata, enlarging it enough to allow free passage of virion capsids. The polypeptide is Movement protein (Cucumis sativus (Cucumber)).